The sequence spans 808 residues: LisH domain-containing protein ARMC9 (808 aa).

Positions 7–39 (YEADLLGLVKEFLNFGEFQETLETFTKECKTKG) constitute a LisH domain. Residues 196–230 (ITLYKESLHNNQELLQQLQQQLMETEHKARTYKKC) adopt a coiled-coil conformation. Disordered regions lie at residues 576–599 (FDES…DALE), 650–709 (PLQR…DYCV), and 742–808 (GMEK…SYRK). Residues 579–599 (SIESDDEEEEKDDEEDEDALE) show a composition bias toward acidic residues. 3 stretches are compositionally biased toward polar residues: residues 655-668 (VTPS…TVRK), 677-709 (TNTF…DYCV), and 775-784 (IAPQFSQSGP). Residues 785 to 808 (QQTSYSSSAGSSTRSRQSTQSYRK) show a composition bias toward low complexity.

The protein localises to the cytoplasm. It is found in the cytoskeleton. The protein resides in the cilium basal body. Its subcellular location is the cell projection. It localises to the cilium. The protein localises to the microtubule organizing center. It is found in the centrosome. The protein resides in the centriole. Functionally, involved in ciliogenesis. It is required for appropriate acetylation and polyglutamylation of ciliary microtubules, and regulation of cilium length. Acts as a positive regulator of hedgehog (Hh)signaling. This Xenopus tropicalis (Western clawed frog) protein is LisH domain-containing protein ARMC9 (armc9).